We begin with the raw amino-acid sequence, 103 residues long: L-rhamnose-binding lectin ELEL-1 (103 aa).

The SUEL-type lectin domain occupies 13–102 (VCEGSSLTIS…KYLELSYDCS (90 aa)). Cystine bridges form between C14/C45, C23/C101, C56/C88, and C69/C75.

In terms of assembly, homodimer; disulfide-linked. Post-translationally, not glycosylated.

Rhamnose-binding lectin. Also binds alpha-D-melibiose, alpha-D-lactose, beta-D-lactose, methyl-alpha-D-galactopyranoside, methyl-beta-D--galactopyranoside and D-galactose but not D-arabinose, L-fucose, D-glucose, D-mannose, D-maltose, D-sucrose, N-acetyl-D-galactosamine, N-acetyl-D-glucosamine, N-acetyl-D-mannosamine-D-xylose or by glycoproteins orosomucoid, thyroglobulin, ovomucoid and porcine stomach mucin. Shows cation-independent hemagglutinating activity against rabbit and human erythrocytes. Agglutinates cells of Gram-positive bacterial species S.aureus but not those of Gram-negative E.coli. The chain is L-rhamnose-binding lectin ELEL-1 from Echinometra lucunter (Rock-boring urchin).